Reading from the N-terminus, the 37-residue chain is GLFTLIKGAAKLIGKTVAKEAGKTGLELMACKITNQC.

Cysteines 31 and 37 form a disulfide.

As to expression, expressed by the skin glands.

The protein localises to the secreted. Functionally, has antibacterial activity against E.coli and S.aureus strains. The polypeptide is Esculentin-2JDa (Odorrana jingdongensis (Jingdong frog)).